Here is a 963-residue protein sequence, read N- to C-terminus: Phosphofurin acidic cluster sorting protein 1 (963 aa).

Residues 1–22 are compositionally biased toward gly residues; that stretch reads MAERGGAGGGPGGAGGGSGQRG. Disordered regions lie at residues 1 to 72 and 78 to 97; these read MAER…SSST and VAVA…RTPA. Alanine 2 is subject to N-acetylalanine. Residue serine 28 is modified to Phosphoserine. The residue at position 46 (threonine 46) is a Phosphothreonine. The segment covering 53–72 has biased composition (low complexity); the sequence is ATSSSSSTSAAAASSSSSST. The involved in binding to AP-1 stretch occupies residues 168-175; that stretch reads ETELQLTF. Residue tyrosine 251 is modified to Phosphotyrosine. A compositionally biased stretch (basic and acidic residues) spans 262–273; sequence GIKSKLSDRSPD. 2 disordered regions span residues 262-299 and 377-428; these read GIKS…LHGQ and NPSD…GKDT. Residues 276-293 show a composition bias toward acidic residues; it reads NYSEEEEESFSSEQEGSD. Residues 353 to 377 adopt a coiled-coil conformation; it reads HVSREQIREVEEDLDELYDSLEMYN. 2 positions are modified to phosphoserine: serine 379 and serine 381. Over residues 406-428 the composition is skewed to polar residues; the sequence is MSQSSSQTEIGSLNSKGSLGKDT. A phosphoserine mark is found at serine 430 and serine 495. 2 disordered regions span residues 476 to 542 and 760 to 804; these read PEKV…HSTQ and SPST…SMSS. Residues 483–496 show a composition bias toward polar residues; it reads MKSSKTDLQGSASP. Threonine 504 is subject to Phosphothreonine. Residues serine 519, serine 528, serine 529, serine 531, and serine 534 each carry the phosphoserine modification. Residues 770 to 804 show a composition bias toward low complexity; that stretch reads SPVVSLTVPSTSPPSSSGLSRDATATPPSSPSMSS.

This sequence belongs to the PACS family. As to quaternary structure, associates with AP-1 and AP-3 but not with AP-2 complexes. Interacts with FURIN. Forms a ternary complex with FURIN and AP-1. Interacts with NPHP1; the interaction is dependent of NPHP1 phosphorylation by CK2. Interacts with PKD2 (via acidic region). Interacts with SORL1. Interacts with WDR37. (Microbial infection) Interacts with HIV-1 Nef. In terms of assembly, (Microbial infection) Interacts with Epstein-barr virus protein BBLF1.

The protein localises to the golgi apparatus. It localises to the trans-Golgi network. Coat protein that is involved in the localization of trans-Golgi network (TGN) membrane proteins that contain acidic cluster sorting motifs. Controls the endosome-to-Golgi trafficking of furin and mannose-6-phosphate receptor by connecting the acidic-cluster-containing cytoplasmic domain of these molecules with the adapter-protein complex-1 (AP-1) of endosomal clathrin-coated membrane pits. Involved in HIV-1 nef-mediated removal of MHC-I from the cell surface to the TGN. Required for normal ER Ca2+ handling in lymphocytes. Together with WDR37, it plays an essential role in lymphocyte development, quiescence and survival. Required for stabilizing peripheral lymphocyte populations. The protein is Phosphofurin acidic cluster sorting protein 1 (PACS1) of Homo sapiens (Human).